A 393-amino-acid polypeptide reads, in one-letter code: Acetylornithine aminotransferase (393 aa).

Residues 100 to 101 and Phe-132 contribute to the pyridoxal 5'-phosphate site; that span reads GT. Arg-135 contributes to the N(2)-acetyl-L-ornithine binding site. 217 to 220 is a pyridoxal 5'-phosphate binding site; it reads DEIQ. Residue Lys-246 is modified to N6-(pyridoxal phosphate)lysine. Ser-275 lines the N(2)-acetyl-L-ornithine pocket. A pyridoxal 5'-phosphate-binding site is contributed by Thr-276.

It belongs to the class-III pyridoxal-phosphate-dependent aminotransferase family. ArgD subfamily. Homodimer. Pyridoxal 5'-phosphate is required as a cofactor.

The protein resides in the cytoplasm. It catalyses the reaction N(2)-acetyl-L-ornithine + 2-oxoglutarate = N-acetyl-L-glutamate 5-semialdehyde + L-glutamate. Its pathway is amino-acid biosynthesis; L-arginine biosynthesis; N(2)-acetyl-L-ornithine from L-glutamate: step 4/4. This Campylobacter jejuni subsp. jejuni serotype O:2 (strain ATCC 700819 / NCTC 11168) protein is Acetylornithine aminotransferase.